A 960-amino-acid chain; its full sequence is Endoplasmic reticulum aminopeptidase 2 (960 aa).

The Cytoplasmic portion of the chain corresponds to 1–20; it reads MFHSSAMVNSHRKPMFNIHR. A helical; Signal-anchor for type II membrane protein transmembrane segment spans residues 21-40; it reads GFYCLTAILPQICICSQFSV. The Lumenal segment spans residues 41–960; that stretch reads PSSYHFTEDP…TLRTWLMVNT (920 aa). Asn85 and Asn119 each carry an N-linked (GlcNAc...) asparagine glycan. Residue Glu200 coordinates substrate. An N-linked (GlcNAc...) asparagine glycan is attached at Asn219. Substrate is bound at residue 334–338; that stretch reads GAMEN. His370 is a Zn(2+) binding site. The active-site Proton acceptor is Glu371. Positions 374 and 393 each coordinate Zn(2+). A glycan (N-linked (GlcNAc...) asparagine) is linked at Asn405. A disulfide bridge links Cys421 with Cys460. N-linked (GlcNAc...) asparagine glycosylation is present at Asn650. The cysteines at positions 759 and 766 are disulfide-linked.

This sequence belongs to the peptidase M1 family. As to quaternary structure, heterodimer with ERAP1. The cofactor is Zn(2+). Post-translationally, N-glycosylated. In terms of tissue distribution, ubiquitously expressed. Highly expressed in spleen and leukocytes.

The protein localises to the endoplasmic reticulum membrane. In terms of biological role, aminopeptidase that plays a central role in peptide trimming, a step required for the generation of most HLA class I-binding peptides. Peptide trimming is essential to customize longer precursor peptides to fit them to the correct length required for presentation on MHC class I molecules. Preferentially hydrolyzes the basic residues Arg and Lys. The chain is Endoplasmic reticulum aminopeptidase 2 (ERAP2) from Homo sapiens (Human).